A 341-amino-acid polypeptide reads, in one-letter code: UDP-3-O-(3-hydroxymyristoyl)glucosamine N-acyltransferase (341 aa).

Catalysis depends on histidine 239, which acts as the Proton acceptor.

It belongs to the transferase hexapeptide repeat family. LpxD subfamily. As to quaternary structure, homotrimer.

The enzyme catalyses a UDP-3-O-[(3R)-3-hydroxyacyl]-alpha-D-glucosamine + a (3R)-hydroxyacyl-[ACP] = a UDP-2-N,3-O-bis[(3R)-3-hydroxyacyl]-alpha-D-glucosamine + holo-[ACP] + H(+). It carries out the reaction UDP-3-O-[(3R)-3-hydroxytetradecanoyl]-alpha-D-glucosamine + (3R)-hydroxytetradecanoyl-[ACP] = UDP-2-N,3-O-bis[(3R)-3-hydroxytetradecanoyl]-alpha-D-glucosamine + holo-[ACP] + H(+). It participates in glycolipid biosynthesis; lipid IV(A) biosynthesis; lipid IV(A) from (3R)-3-hydroxytetradecanoyl-[acyl-carrier-protein] and UDP-N-acetyl-alpha-D-glucosamine: step 3/6. Its function is as follows. Catalyzes the N-acylation of UDP-3-O-(hydroxytetradecanoyl)glucosamine using 3-hydroxytetradecanoyl-ACP as the acyl donor. Is involved in the biosynthesis of lipid A, a phosphorylated glycolipid that anchors the lipopolysaccharide to the outer membrane of the cell. This is UDP-3-O-(3-hydroxymyristoyl)glucosamine N-acyltransferase from Salmonella paratyphi A (strain ATCC 9150 / SARB42).